Reading from the N-terminus, the 172-residue chain is ATP synthase subunit b (172 aa).

The chain crosses the membrane as a helical span at residues Leu11–Phe30.

Belongs to the ATPase B chain family. F-type ATPases have 2 components, F(1) - the catalytic core - and F(0) - the membrane proton channel. F(1) has five subunits: alpha(3), beta(3), gamma(1), delta(1), epsilon(1). F(0) has three main subunits: a(1), b(2) and c(10-14). The alpha and beta chains form an alternating ring which encloses part of the gamma chain. F(1) is attached to F(0) by a central stalk formed by the gamma and epsilon chains, while a peripheral stalk is formed by the delta and b chains.

Its subcellular location is the cell inner membrane. In terms of biological role, f(1)F(0) ATP synthase produces ATP from ADP in the presence of a proton or sodium gradient. F-type ATPases consist of two structural domains, F(1) containing the extramembraneous catalytic core and F(0) containing the membrane proton channel, linked together by a central stalk and a peripheral stalk. During catalysis, ATP synthesis in the catalytic domain of F(1) is coupled via a rotary mechanism of the central stalk subunits to proton translocation. Its function is as follows. Component of the F(0) channel, it forms part of the peripheral stalk, linking F(1) to F(0). The chain is ATP synthase subunit b from Methylacidiphilum infernorum (isolate V4) (Methylokorus infernorum (strain V4)).